Here is a 66-residue protein sequence, read N- to C-terminus: Putative inactive (E)-beta-ocimene synthase, chloroplastic (66 aa).

The N-terminal 25 residues, 1 to 25, are a transit peptide targeting the chloroplast; sequence MAAHNLCFNSAFVCNVHHQKTQHFP.

It belongs to the terpene synthase family. Tpsb subfamily. As to expression, expressed exclusively in flowers.

Its subcellular location is the plastid. The protein localises to the chloroplast. This Arabidopsis thaliana (Mouse-ear cress) protein is Putative inactive (E)-beta-ocimene synthase, chloroplastic (TPS02).